The sequence spans 216 residues: Ras-related protein Rab-5C (216 aa).

GTP-binding residues include serine 30, alanine 31, glycine 33, lysine 34, serine 35, serine 36, histidine 47, glutamate 48, threonine 53, and glycine 79. Serine 35 contributes to the Mg(2+) binding site. Short sequence motifs (switch) lie at residues 45 to 57 (QFHE…IGAA) and 78 to 94 (AGQE…YRGA). Threonine 53 provides a ligand contact to Mg(2+). The residue at position 85 (serine 85) is a Phosphoserine. 5 residues coordinate GTP: asparagine 134, lysine 135, aspartate 137, alanine 165, and lysine 166. Residues 185–216 (NEPQNAAGAPGRNRGVDLQENNPASRSQCCSN) form a disordered region. A compositionally biased stretch (polar residues) spans 203 to 216 (QENNPASRSQCCSN). 2 S-geranylgeranyl cysteine lipidation sites follow: cysteine 213 and cysteine 214.

It belongs to the small GTPase superfamily. Rab family. As to quaternary structure, interacts with EEA1 and INCA1. Interacts with GDI1, GDI2, CHML and CHM; phosphorylation at Ser-85 disrupts this interaction. The cofactor is Mg(2+). In terms of processing, phosphorylation of Ser-85 in the switch II region by LRRK2 prevents the association of RAB regulatory proteins, including CHM, CHML and RAB GDP dissociation inhibitors GDI1 and GDI2.

The protein resides in the cell membrane. It is found in the early endosome membrane. The protein localises to the melanosome. The enzyme catalyses GTP + H2O = GDP + phosphate + H(+). Regulated by guanine nucleotide exchange factors (GEFs) which promote the exchange of bound GDP for free GTP. Regulated by GTPase activating proteins (GAPs) which increase the GTP hydrolysis activity. Inhibited by GDP dissociation inhibitors (GDIs). Its function is as follows. The small GTPases Rab are key regulators of intracellular membrane trafficking, from the formation of transport vesicles to their fusion with membranes. Rabs cycle between an inactive GDP-bound form and an active GTP-bound form that is able to recruit to membranes different sets of downstream effectors directly responsible for vesicle formation, movement, tethering and fusion. In Bos taurus (Bovine), this protein is Ras-related protein Rab-5C (RAB5C).